The sequence spans 357 residues: tRNA N6-adenosine threonylcarbamoyltransferase (357 aa).

His119 and His123 together coordinate Fe cation. Substrate-binding positions include Leu141–Gly145, Asp174, Gly187, and Asn284. Asp312 is a Fe cation binding site.

It belongs to the KAE1 / TsaD family. It depends on Fe(2+) as a cofactor.

It is found in the cytoplasm. The enzyme catalyses L-threonylcarbamoyladenylate + adenosine(37) in tRNA = N(6)-L-threonylcarbamoyladenosine(37) in tRNA + AMP + H(+). Required for the formation of a threonylcarbamoyl group on adenosine at position 37 (t(6)A37) in tRNAs that read codons beginning with adenine. Is involved in the transfer of the threonylcarbamoyl moiety of threonylcarbamoyl-AMP (TC-AMP) to the N6 group of A37, together with TsaE and TsaB. TsaD likely plays a direct catalytic role in this reaction. In Pelagibacter ubique (strain HTCC1062), this protein is tRNA N6-adenosine threonylcarbamoyltransferase.